The chain runs to 500 residues: MQDQYILALDQGTTSSRAMLFDRQGNIVSIAQKEFEQIYPQPGWVEHDPQEIWSTQAGVAAEAVTRTGLNGTSIAAIGITNQRETTIVWDRETGQPVYNAIVWQDRRTADFCDSLKKQGLEAKVRAKTGLPIDSYFSATKIRWILDNVPGARDKARQGKLAFGTVDSWLVWNFTKHELHVTDVTNASRTMLFNIHTREWDSELLELLDIPRSMLPEVKASSEIYGHTKTTVFASKIPLAGIAGDQHAALFGQMCTTSGMVKNTYGTGCFLMMNTGDKPIESKNNLVTTIAWQIGDDVQYALEGSIFIAGAVVQWLRDGVGLIKTAAEIEALAASVPHTDGVYLVPAFAGLGAPHWNARARGSVFGVTRGTSAAHLARAALDAIAYQSLDVLAAMEADSGISIGELRVDGGASANDLLMQFQADLLGVDAVRPQITETTALGAAYLAGLAIGYWKNLDEVRDQWQLDRRFAPSMPKEQVEQRMAGWQRAVRAAKAWADDTQ.

Thr-13 is a binding site for ADP. Thr-13, Thr-14, and Ser-15 together coordinate ATP. Thr-13 contributes to the sn-glycerol 3-phosphate binding site. Arg-17 is a binding site for ADP. Residues Arg-83, Glu-84, Tyr-135, and Asp-244 each contribute to the sn-glycerol 3-phosphate site. 5 residues coordinate glycerol: Arg-83, Glu-84, Tyr-135, Asp-244, and Gln-245. Thr-266 and Gly-309 together coordinate ADP. ATP contacts are provided by Thr-266, Gly-309, Gln-313, and Gly-410. Positions 410 and 414 each coordinate ADP.

This sequence belongs to the FGGY kinase family.

It carries out the reaction glycerol + ATP = sn-glycerol 3-phosphate + ADP + H(+). It functions in the pathway polyol metabolism; glycerol degradation via glycerol kinase pathway; sn-glycerol 3-phosphate from glycerol: step 1/1. Its activity is regulated as follows. Inhibited by fructose 1,6-bisphosphate (FBP). Key enzyme in the regulation of glycerol uptake and metabolism. Catalyzes the phosphorylation of glycerol to yield sn-glycerol 3-phosphate. The chain is Glycerol kinase from Burkholderia cenocepacia (strain HI2424).